A 535-amino-acid chain; its full sequence is Arylsulfatase K (535 aa).

The first 21 residues, 1–21, serve as a signal peptide directing secretion; it reads MGSGGPLLLLRGLLLVGAAYC. Ca(2+)-binding residues include aspartate 41 and cysteine 81. Catalysis depends on cysteine 81, which acts as the Nucleophile. Cysteine 81 is modified (3-oxoalanine (Cys)). Position 129 (lysine 129) interacts with substrate. Asparagine 194 carries an N-linked (GlcNAc...) asparagine glycan. Histidine 252 is a binding site for substrate. Residue asparagine 263 is glycosylated (N-linked (GlcNAc...) asparagine). Ca(2+) contacts are provided by aspartate 314 and histidine 315. 3 N-linked (GlcNAc...) asparagine glycosylation sites follow: asparagine 376, asparagine 414, and asparagine 499.

This sequence belongs to the sulfatase family. Requires Ca(2+) as cofactor. The conversion to 3-oxoalanine (also known as C-formylglycine, FGly), of a serine or cysteine residue in prokaryotes and of a cysteine residue in eukaryotes, is critical for catalytic activity.

It localises to the secreted. Its subcellular location is the lysosome. The enzyme catalyses an aryl sulfate + H2O = a phenol + sulfate + H(+). It carries out the reaction Hydrolysis of the 2-sulfate groups of the 2-O-sulfo-D-glucuronate residues of chondroitin sulfate, heparin and heparitin sulfate.. Catalyzes the hydrolysis of pseudosubstrates such as p-nitrocatechol sulfate and p-nitrophenyl sulfate. Catalyzes the hydrolysis of the 2-sulfate groups of the 2-O-sulfo-D-glucuronate residues of chondroitin sulfate, heparin and heparitin sulfate. Acts selectively on 2-sulfoglucuronate and lacks activity against 2-sulfoiduronate. The protein is Arylsulfatase K (ARSK) of Gallus gallus (Chicken).